Here is a 471-residue protein sequence, read N- to C-terminus: Putative multidrug resistance protein MdtD (471 aa).

Over 1–11 (MTDLPDSTRWQ) the chain is Periplasmic. Residues 12-32 (LWIVAFGFFMQSLDTTIVNTA) form a helical membrane-spanning segment. The Cytoplasmic portion of the chain corresponds to 33–48 (LPSMAQSLGESPLHMH). The chain crosses the membrane as a helical span at residues 49-69 (MVIVSYVLTVAVMLPASGWLA). Residues 70–76 (DKVGVRN) lie on the Periplasmic side of the membrane. The chain crosses the membrane as a helical span at residues 77–97 (IFFTAIVLFTLGSLFCALSGT). Topologically, residues 98–101 (LNEL) are cytoplasmic. The chain crosses the membrane as a helical span at residues 102–124 (LLARALQGVGGAMMVPVGRLTVM). Residues 125–137 (KIVPREQYMAAMT) are Periplasmic-facing. Residues 138-158 (FVTLPGQVGPLLGPALGGLLV) form a helical membrane-spanning segment. The Cytoplasmic segment spans residues 159 to 164 (EYASWH). The helical transmembrane segment at 165–185 (WIFLINIPVGIIGAIATLMLM) threads the bilayer. The Periplasmic portion of the chain corresponds to 186 to 196 (PNYTMQTRRFD). The chain crosses the membrane as a helical span at residues 197–217 (LSGFLLLAVGMAVLTLALDGS). Residues 218–224 (KGTGLSP) are Cytoplasmic-facing. The helical transmembrane segment at 225–245 (LAIAGLVAVGVVALVLYLLHA) threads the bilayer. The Periplasmic segment spans residues 246-262 (RNNNRALFSLKLFRTRT). The helical transmembrane segment at 263–283 (FSLGLAGSFAGRIGSGMLPFM) threads the bilayer. Residues 284–285 (TP) lie on the Cytoplasmic side of the membrane. Residues 286–306 (VFLQIGLGFSPFHAGLMMIPM) form a helical membrane-spanning segment. The Periplasmic segment spans residues 307–341 (VLGSMGMKRIVVQVVNRFGYRRVLVATTLGLSLVT). The chain crosses the membrane as a helical span at residues 342-362 (LLFMTTALLGWYYVLPFVLFL). Topologically, residues 363-395 (QGMVNSTRFSSMNTLTLKDLPDNLASSGNSLLS) are cytoplasmic. Residues 396 to 416 (MIMQLSMSIGVTIAGLLLGLF) form a helical membrane-spanning segment. At 417 to 430 (GSQHISVDSGTTQT) the chain is on the periplasmic side. The chain crosses the membrane as a helical span at residues 431–451 (VFMYTWLSMAFIIALPAFIFA). Over 452–471 (RVPNDTHQNVAISRRKRSAQ) the chain is Cytoplasmic.

Belongs to the major facilitator superfamily. TCR/Tet family.

The protein resides in the cell inner membrane. The chain is Putative multidrug resistance protein MdtD from Shigella flexneri.